The sequence spans 597 residues: DNA mismatch repair protein MutL (597 aa).

The protein belongs to the DNA mismatch repair MutL/HexB family.

This protein is involved in the repair of mismatches in DNA. It is required for dam-dependent methyl-directed DNA mismatch repair. May act as a 'molecular matchmaker', a protein that promotes the formation of a stable complex between two or more DNA-binding proteins in an ATP-dependent manner without itself being part of a final effector complex. The protein is DNA mismatch repair protein MutL of Rhodopseudomonas palustris (strain HaA2).